We begin with the raw amino-acid sequence, 186 residues long: ATP synthase subunit delta (186 aa).

This sequence belongs to the ATPase delta chain family. F-type ATPases have 2 components, F(1) - the catalytic core - and F(0) - the membrane proton channel. F(1) has five subunits: alpha(3), beta(3), gamma(1), delta(1), epsilon(1). F(0) has three main subunits: a(1), b(2) and c(10-14). The alpha and beta chains form an alternating ring which encloses part of the gamma chain. F(1) is attached to F(0) by a central stalk formed by the gamma and epsilon chains, while a peripheral stalk is formed by the delta and b chains.

The protein localises to the cellular chromatophore membrane. Functionally, f(1)F(0) ATP synthase produces ATP from ADP in the presence of a proton or sodium gradient. F-type ATPases consist of two structural domains, F(1) containing the extramembraneous catalytic core and F(0) containing the membrane proton channel, linked together by a central stalk and a peripheral stalk. During catalysis, ATP synthesis in the catalytic domain of F(1) is coupled via a rotary mechanism of the central stalk subunits to proton translocation. This protein is part of the stalk that links CF(0) to CF(1). It either transmits conformational changes from CF(0) to CF(1) or is implicated in proton conduction. This Rhodobacter capsulatus (Rhodopseudomonas capsulata) protein is ATP synthase subunit delta.